The sequence spans 466 residues: 3-isopropylmalate dehydratase large subunit (466 aa).

Cys-347, Cys-407, and Cys-410 together coordinate [4Fe-4S] cluster.

This sequence belongs to the aconitase/IPM isomerase family. LeuC type 1 subfamily. In terms of assembly, heterodimer of LeuC and LeuD. [4Fe-4S] cluster is required as a cofactor.

The enzyme catalyses (2R,3S)-3-isopropylmalate = (2S)-2-isopropylmalate. Its pathway is amino-acid biosynthesis; L-leucine biosynthesis; L-leucine from 3-methyl-2-oxobutanoate: step 2/4. Functionally, catalyzes the isomerization between 2-isopropylmalate and 3-isopropylmalate, via the formation of 2-isopropylmaleate. This is 3-isopropylmalate dehydratase large subunit from Shewanella woodyi (strain ATCC 51908 / MS32).